The primary structure comprises 386 residues: Innexin unc-9 (386 aa).

4 helical membrane-spanning segments follow: residues 33 to 53, 103 to 123, 197 to 217, and 282 to 302; these read TAIITVFAILVSAKQYVGFPI, QWVPFVLALEALLFYVPTIVW, FLYISVKILYTVNIVGQIFLL, and IFLFLWFWYFLLAGATLCSLF.

Belongs to the pannexin family. As to quaternary structure, heterooligomer of unc-7 and unc-9. Interacts with F-actin. As to expression, expressed in PLM neurons (at protein level). Expressed in the nerve ring.

It is found in the cell membrane. The protein localises to the cell junction. The protein resides in the gap junction. Structural component of gap junctions. Plays a role in maintaining gap junction activity to promote locomotion. The polypeptide is Innexin unc-9 (Caenorhabditis elegans).